The primary structure comprises 339 residues: MEITLFDPIDAHLHVREDALLKAVLRYSSEPFSAAVIMPNLSKPLIDTPTTLEYEEEILKNSSNFKPLMSLYFNDGLTLEELQRAQEKGIRFLKLYPKGMTTNAQNGTSDLLGEKTLEILENAQKLGFILCIHAEQAGFCLDKEFLCHSVLETFALSFPKLKIIIEHLSDWRSIALIEKHTNLYATLTLHHISMTLDDLLGGSLNPHCFCKPLIKTKKDQERLLSLALKAHPKISFGSDSAPHFVSKKHSASIPAGIFSAPILLPALCELFEKHNALENLQAFISDNAKKIYTLDNLPNKKARLSKKPFIVPTHTICLNEKIAILRGGETLSWNLQEIA.

Zn(2+)-binding residues include histidine 12 and histidine 14. Substrate contacts are provided by residues histidine 14–arginine 16 and asparagine 40. Lysine 94, histidine 133, histidine 167, and aspartate 239 together coordinate Zn(2+). At lysine 94 the chain carries N6-carboxylysine. A substrate-binding site is contributed by histidine 133. Aspartate 239 is a catalytic residue. Substrate-binding residues include histidine 243 and alanine 255.

This sequence belongs to the metallo-dependent hydrolases superfamily. DHOase family. Class II DHOase subfamily. In terms of assembly, homodimer. Zn(2+) is required as a cofactor.

The catalysed reaction is (S)-dihydroorotate + H2O = N-carbamoyl-L-aspartate + H(+). It participates in pyrimidine metabolism; UMP biosynthesis via de novo pathway; (S)-dihydroorotate from bicarbonate: step 3/3. Functionally, catalyzes the reversible cyclization of carbamoyl aspartate to dihydroorotate. The sequence is that of Dihydroorotase from Helicobacter pylori (strain G27).